Reading from the N-terminus, the 211-residue chain is Thiamine-phosphate synthase (211 aa).

4-amino-2-methyl-5-(diphosphooxymethyl)pyrimidine-binding positions include 37 to 41 and asparagine 69; that span reads QLRIK. Mg(2+) is bound by residues aspartate 70 and aspartate 89. Residue serine 108 coordinates 4-amino-2-methyl-5-(diphosphooxymethyl)pyrimidine. 134 to 136 provides a ligand contact to 2-[(2R,5Z)-2-carboxy-4-methylthiazol-5(2H)-ylidene]ethyl phosphate; sequence TQT. Lysine 137 provides a ligand contact to 4-amino-2-methyl-5-(diphosphooxymethyl)pyrimidine. 2-[(2R,5Z)-2-carboxy-4-methylthiazol-5(2H)-ylidene]ethyl phosphate contacts are provided by residues glycine 166 and 186-187; that span reads VS.

Belongs to the thiamine-phosphate synthase family. The cofactor is Mg(2+).

It catalyses the reaction 2-[(2R,5Z)-2-carboxy-4-methylthiazol-5(2H)-ylidene]ethyl phosphate + 4-amino-2-methyl-5-(diphosphooxymethyl)pyrimidine + 2 H(+) = thiamine phosphate + CO2 + diphosphate. The enzyme catalyses 2-(2-carboxy-4-methylthiazol-5-yl)ethyl phosphate + 4-amino-2-methyl-5-(diphosphooxymethyl)pyrimidine + 2 H(+) = thiamine phosphate + CO2 + diphosphate. It carries out the reaction 4-methyl-5-(2-phosphooxyethyl)-thiazole + 4-amino-2-methyl-5-(diphosphooxymethyl)pyrimidine + H(+) = thiamine phosphate + diphosphate. It participates in cofactor biosynthesis; thiamine diphosphate biosynthesis; thiamine phosphate from 4-amino-2-methyl-5-diphosphomethylpyrimidine and 4-methyl-5-(2-phosphoethyl)-thiazole: step 1/1. In terms of biological role, condenses 4-methyl-5-(beta-hydroxyethyl)thiazole monophosphate (THZ-P) and 2-methyl-4-amino-5-hydroxymethyl pyrimidine pyrophosphate (HMP-PP) to form thiamine monophosphate (TMP). This chain is Thiamine-phosphate synthase, found in Salmonella paratyphi A (strain ATCC 9150 / SARB42).